Consider the following 250-residue polypeptide: Transmembrane protein 106C (250 aa).

The interval 1–25 is disordered; the sequence is MGSQHSAAARPSSCRRKQEDDRDGL. Gly-2 carries N-myristoyl glycine lipidation. Basic and acidic residues predominate over residues 16-25; sequence RKQEDDRDGL. The chain crosses the membrane as a helical span at residues 87–107; sequence YVLLSILLCLLASGLVVFFLF. Asn-173 and Asn-186 each carry an N-linked (GlcNAc...) asparagine glycan. The helical transmembrane segment at 197-217 threads the bilayer; the sequence is FSYVYFFCTVPEILVHNIVIF.

Belongs to the TMEM106 family. Interacts with TMEM106B.

The protein localises to the endoplasmic reticulum membrane. It is found in the membrane. The chain is Transmembrane protein 106C (TMEM106C) from Homo sapiens (Human).